We begin with the raw amino-acid sequence, 78 residues long: Cell division topological specificity factor (78 aa).

This sequence belongs to the MinE family.

In terms of biological role, prevents the cell division inhibition by proteins MinC and MinD at internal division sites while permitting inhibition at polar sites. This ensures cell division at the proper site by restricting the formation of a division septum at the midpoint of the long axis of the cell. The chain is Cell division topological specificity factor from Helicobacter hepaticus (strain ATCC 51449 / 3B1).